The primary structure comprises 158 residues: Transcription elongation factor GreB (158 aa).

The stretch at 53-75 (KRRLREIDRRVRFLTKRLEVLQI) forms a coiled coil.

Belongs to the GreA/GreB family. GreB subfamily.

In terms of biological role, necessary for efficient RNA polymerase transcription elongation past template-encoded arresting sites. The arresting sites in DNA have the property of trapping a certain fraction of elongating RNA polymerases that pass through, resulting in locked ternary complexes. Cleavage of the nascent transcript by cleavage factors such as GreA or GreB allows the resumption of elongation from the new 3'terminus. GreB releases sequences of up to 9 nucleotides in length. This Haemophilus influenzae (strain ATCC 51907 / DSM 11121 / KW20 / Rd) protein is Transcription elongation factor GreB.